The sequence spans 507 residues: Iroquois-class homeodomain protein IRX-3 (507 aa).

The tract at residues 19–39 (RPGAAGGGGGGSSAGGRSGPG) is disordered. Gly residues predominate over residues 22–39 (AAGGGGGGSSAGGRSGPG). Positions 130 to 192 (DPSRPKNATR…NARRRLKKEN (63 aa)) form a DNA-binding region, homeobox; TALE-type. Disordered regions lie at residues 193-398 (KMTW…AAAA) and 416-468 (RPFP…SGTD). 2 stretches are compositionally biased toward acidic residues: residues 213 to 223 (REEEDEEEDEE) and 230 to 261 (EMEE…DLEN). Composition is skewed to pro residues over residues 314–342 (APPP…PAPA) and 418–428 (FPGPPAGPRPH). Phosphoserine occurs at positions 326 and 329. Over residues 436-460 (APQHLLGLPGAAGHPAAAAAAYARP) the composition is skewed to low complexity.

It belongs to the TALE/IRO homeobox family. Expressed by neural progenitor cells in discrete domains of the ventral neural tube. Also expressed in specific and overlapping patterns with Irx1 and Irx2 in the developing and adult metanephric kidney. In the adult metanephros, renal expression is confined to the S3 segment of the proximal tubule, in the loop of Henle.

It is found in the nucleus. Its function is as follows. Transcription factor involved in SHH-dependent neural patterning. Together with NKX2-2 and NKX6-1 acts to restrict the generation of motor neurons to the appropriate region of the neural tube. Belongs to the class I proteins of neuronal progenitor factors, which are repressed by SHH signals. Involved in the transcriptional repression of MNX1 in non-motor neuron cells. Acts as a regulator of energy metabolism. This Mus musculus (Mouse) protein is Iroquois-class homeodomain protein IRX-3 (Irx3).